Here is a 122-residue protein sequence, read N- to C-terminus: Large ribosomal subunit protein uL14c (122 aa).

Belongs to the universal ribosomal protein uL14 family. As to quaternary structure, part of the 50S ribosomal subunit.

It is found in the plastid. The protein resides in the chloroplast. Binds to 23S rRNA. This is Large ribosomal subunit protein uL14c from Psilotum nudum (Whisk fern).